Consider the following 308-residue polypeptide: Elongation factor Ts (308 aa).

The interval 80 to 83 is involved in Mg(2+) ion dislocation from EF-Tu; it reads TDFV.

The protein belongs to the EF-Ts family.

It is found in the cytoplasm. Associates with the EF-Tu.GDP complex and induces the exchange of GDP to GTP. It remains bound to the aminoacyl-tRNA.EF-Tu.GTP complex up to the GTP hydrolysis stage on the ribosome. The protein is Elongation factor Ts of Rhizobium etli (strain CIAT 652).